The chain runs to 340 residues: Anthranilate phosphoribosyltransferase (340 aa).

5-phospho-alpha-D-ribose 1-diphosphate is bound by residues G79, 82 to 83 (GD), S87, 89 to 92 (NIST), 107 to 115 (KHGNRSVSS), and S119. Position 79 (G79) interacts with anthranilate. Residue S91 participates in Mg(2+) binding. Anthranilate is bound at residue N110. R165 contacts anthranilate. Mg(2+)-binding residues include D224 and E225.

This sequence belongs to the anthranilate phosphoribosyltransferase family. Homodimer. Requires Mg(2+) as cofactor.

The catalysed reaction is N-(5-phospho-beta-D-ribosyl)anthranilate + diphosphate = 5-phospho-alpha-D-ribose 1-diphosphate + anthranilate. It functions in the pathway amino-acid biosynthesis; L-tryptophan biosynthesis; L-tryptophan from chorismate: step 2/5. In terms of biological role, catalyzes the transfer of the phosphoribosyl group of 5-phosphorylribose-1-pyrophosphate (PRPP) to anthranilate to yield N-(5'-phosphoribosyl)-anthranilate (PRA). This Oceanobacillus iheyensis (strain DSM 14371 / CIP 107618 / JCM 11309 / KCTC 3954 / HTE831) protein is Anthranilate phosphoribosyltransferase.